The chain runs to 94 residues: Aspartyl/glutamyl-tRNA(Asn/Gln) amidotransferase subunit C (94 aa).

The protein belongs to the GatC family. As to quaternary structure, heterotrimer of A, B and C subunits.

It carries out the reaction L-glutamyl-tRNA(Gln) + L-glutamine + ATP + H2O = L-glutaminyl-tRNA(Gln) + L-glutamate + ADP + phosphate + H(+). It catalyses the reaction L-aspartyl-tRNA(Asn) + L-glutamine + ATP + H2O = L-asparaginyl-tRNA(Asn) + L-glutamate + ADP + phosphate + 2 H(+). Its function is as follows. Allows the formation of correctly charged Asn-tRNA(Asn) or Gln-tRNA(Gln) through the transamidation of misacylated Asp-tRNA(Asn) or Glu-tRNA(Gln) in organisms which lack either or both of asparaginyl-tRNA or glutaminyl-tRNA synthetases. The reaction takes place in the presence of glutamine and ATP through an activated phospho-Asp-tRNA(Asn) or phospho-Glu-tRNA(Gln). The protein is Aspartyl/glutamyl-tRNA(Asn/Gln) amidotransferase subunit C of Desulfitobacterium hafniense (strain DSM 10664 / DCB-2).